The primary structure comprises 260 residues: MVLDEIVRHKKKEVEEKKRIKPVEELINEIKGGYSGNFKKVLQKEGISIIGEIKKASPSKGIIKEDFDSVKIAKVYEKVDVDAISVLTEKEFFKGDDNYIREVKKVSSKPILRKDFIVDEYQIYESKILGADAVLLIVSVLGDKLRDFYNLSKSVGLDVLVEIHDRQQLEIALEAGCDIIGINNRDLKTFNVDINTTENLIKYIPQNTTIVSESGIKTPEDIRYLASLGVDAVLIGETFMKIIDDIDKISDFVKEAKGGG.

Belongs to the TrpC family.

It catalyses the reaction 1-(2-carboxyphenylamino)-1-deoxy-D-ribulose 5-phosphate + H(+) = (1S,2R)-1-C-(indol-3-yl)glycerol 3-phosphate + CO2 + H2O. It functions in the pathway amino-acid biosynthesis; L-tryptophan biosynthesis; L-tryptophan from chorismate: step 4/5. The chain is Indole-3-glycerol phosphate synthase from Thermoanaerobacter pseudethanolicus (strain ATCC 33223 / 39E) (Clostridium thermohydrosulfuricum).